The sequence spans 320 residues: NAD kinase (320 aa).

Catalysis depends on Asp96, which acts as the Proton acceptor. NAD(+)-binding positions include 96-97, Arg101, 170-171, Asp200, and 211-216; these read DG, NE, and TAYAFS.

It belongs to the NAD kinase family. A divalent metal cation is required as a cofactor.

The protein resides in the cytoplasm. The enzyme catalyses NAD(+) + ATP = ADP + NADP(+) + H(+). Functionally, involved in the regulation of the intracellular balance of NAD and NADP, and is a key enzyme in the biosynthesis of NADP. Catalyzes specifically the phosphorylation on 2'-hydroxyl of the adenosine moiety of NAD to yield NADP. This Rhodococcus jostii (strain RHA1) protein is NAD kinase.